The primary structure comprises 226 residues: Flagellar L-ring protein (226 aa).

The N-terminal stretch at 1-15 (MRILGLSAALLILGG) is a signal peptide. Cys-16 carries N-palmitoyl cysteine lipidation. Cys-16 carries the S-diacylglycerol cysteine lipid modification.

The protein belongs to the FlgH family. The basal body constitutes a major portion of the flagellar organelle and consists of four rings (L,P,S, and M) mounted on a central rod.

It localises to the cell outer membrane. The protein localises to the bacterial flagellum basal body. In terms of biological role, assembles around the rod to form the L-ring and probably protects the motor/basal body from shearing forces during rotation. The sequence is that of Flagellar L-ring protein from Alteromonas mediterranea (strain DSM 17117 / CIP 110805 / LMG 28347 / Deep ecotype).